The sequence spans 288 residues: Quinate/shikimate dehydrogenase (288 aa).

2 residues coordinate substrate: Lys-71 and Asp-107. Residues 132–135, 155–158, Lys-205, 232–235, and Gly-255 each bind NAD(+); these read AGGA, NRRD, and CVYN.

This sequence belongs to the shikimate dehydrogenase family. Homodimer.

The enzyme catalyses L-quinate + NAD(+) = 3-dehydroquinate + NADH + H(+). The catalysed reaction is L-quinate + NADP(+) = 3-dehydroquinate + NADPH + H(+). It carries out the reaction shikimate + NADP(+) = 3-dehydroshikimate + NADPH + H(+). It catalyses the reaction shikimate + NAD(+) = 3-dehydroshikimate + NADH + H(+). Its pathway is metabolic intermediate biosynthesis; chorismate biosynthesis; chorismate from D-erythrose 4-phosphate and phosphoenolpyruvate: step 4/7. In terms of biological role, the actual biological function of YdiB remains unclear, nor is it known whether 3-dehydroshikimate or quinate represents the natural substrate. Catalyzes the reversible NAD-dependent reduction of both 3-dehydroshikimate (DHSA) and 3-dehydroquinate to yield shikimate (SA) and quinate, respectively. It can use both NAD or NADP for catalysis, however it has higher catalytic efficiency with NAD. This is Quinate/shikimate dehydrogenase from Escherichia coli (strain 55989 / EAEC).